Here is a 444-residue protein sequence, read N- to C-terminus: Glutamate--tRNA ligase 2 (444 aa).

A 'HIGH' region motif is present at residues 8-18; the sequence is PSPTGHLHAGN. Positions 241–245 match the 'KMSKS' region motif; that stretch reads KLSKR. K244 provides a ligand contact to ATP.

This sequence belongs to the class-I aminoacyl-tRNA synthetase family. Glutamate--tRNA ligase type 1 subfamily. In terms of assembly, monomer.

The protein resides in the cytoplasm. The enzyme catalyses tRNA(Glu) + L-glutamate + ATP = L-glutamyl-tRNA(Glu) + AMP + diphosphate. Its function is as follows. Catalyzes the attachment of glutamate to tRNA(Glu) in a two-step reaction: glutamate is first activated by ATP to form Glu-AMP and then transferred to the acceptor end of tRNA(Glu). The protein is Glutamate--tRNA ligase 2 of Acidiphilium cryptum (strain JF-5).